The chain runs to 130 residues: Small ribosomal subunit protein eS8 (130 aa).

It belongs to the eukaryotic ribosomal protein eS8 family. As to quaternary structure, part of the 30S ribosomal subunit.

The polypeptide is Small ribosomal subunit protein eS8 (Thermococcus onnurineus (strain NA1)).